Here is a 302-residue protein sequence, read N- to C-terminus: MEGSEDEEAEAGGPLQQLVKRQRREKRELQAKIQGMKNAVPKNDKKRRKQLAEEVAKLEAELEQKHKEELKQLKEAMPEQNKIDSIADGVANFELEGREQQIQHPRISKAQKRREKKAALEKEREERIAEAEIENLTGARHLESQKLASLLAARHLEIKQIPSDGHCMYRAIEDQLKDHHNSWTVATLRNQTAKYIHSHFDDFLPFLTNPNTGDMYSKEEFEKYCDDIANTAAWGGQLELRALSHILQTPIEVVQMDSPSIIVGEEYSGKPIILVYMRHAYGLGEHYNSVKLLTDATTENGS.

Positions 1–10 are enriched in acidic residues; the sequence is MEGSEDEEAE. Disordered regions lie at residues 1-52 and 99-121; these read MEGS…KQLA and EQQIQHPRISKAQKRREKKAALE. Over residues 106–116 the composition is skewed to basic residues; that stretch reads RISKAQKRREK. Positions 156–293 constitute an OTU domain; the sequence is LEIKQIPSDG…GEHYNSVKLL (138 aa). Residues 161–167 form a cys-loop region; the sequence is IPSDGHC. Residue aspartate 164 is part of the active site. The active-site Nucleophile is cysteine 167. The interval 228–238 is variable-loop; the sequence is IANTAAWGGQL. Residues 276 to 286 are his-loop; the sequence is YMRHAYGLGEH. Residue histidine 286 is part of the active site.

The enzyme catalyses Thiol-dependent hydrolysis of ester, thioester, amide, peptide and isopeptide bonds formed by the C-terminal Gly of ubiquitin (a 76-residue protein attached to proteins as an intracellular targeting signal).. Functionally, deubiquitinating enzyme that may play a role in the ubiquitin-dependent regulation of different cellular processes. In Gallus gallus (Chicken), this protein is Deubiquitinase OTUD6B (OTUD6B).